A 742-amino-acid chain; its full sequence is Envelope glycoprotein H (742 aa).

The N-terminal stretch at 1–29 (MRPGLPSYLIVLAVCLLSHLLSSRYGAEA) is a signal peptide. Residues 30–719 (ISEPLDKAFH…VVDATDSRLL (690 aa)) are Virion surface-facing. N-linked (GlcNAc...) asparagine; by host glycans are attached at residues N55, N62, N67, and N192. The interaction with gL stretch occupies residues 217 to 280 (YLIDELRYVK…QTEKHELLVL (64 aa)). N641 and N700 each carry an N-linked (GlcNAc...) asparagine; by host glycan. Residues 720–740 (MMSVYALSAIIGIYLLYRMLK) traverse the membrane as a helical segment. At 741-742 (TC) the chain is on the intravirion side.

It belongs to the herpesviridae glycoprotein H family. In terms of assembly, interacts with glycoprotein L (gL); this interaction is necessary for the correct processing and cell surface expression of gH. The heterodimer gH/gL seems to interact with gB trimers during fusion. Forms the envelope pentamer complex (PC) composed of gH, gL, UL128, UL130, and UL131A. The pentamer interacts with host NRP2. Forms the envelope trimer complex composed of gH, gL, and gO. The trimer interacts with host PDGFRA. The trimer also interacts with host EPHA2. N-glycosylated, O-glycosylated, and sialylated.

The protein resides in the virion membrane. It is found in the host cell membrane. The protein localises to the host endosome membrane. Functionally, the heterodimer glycoprotein H-glycoprotein L is required for the fusion of viral and plasma membranes leading to virus entry into the host cell. Following initial binding to host receptor, membrane fusion is mediated by the fusion machinery composed of gB and the heterodimer gH/gL. May also be involved in the fusion between the virion envelope and the outer nuclear membrane during virion morphogenesis. In human cytomegalovirus, forms two distincts complexes to mediate viral entry, a trimer and a pentamer at the surface of the virion envelope. The gH-gL-gO trimer is required for infection in fibroblasts by interacting with host PDGFRA, and in glioblastoma cells by interacting with host EPHA2. The gH-gL-UL128-UL130-UL131A pentamer is essential for viral entry in epithelial, endothelial and myeloid cells via interaction with host NRP2. In Human cytomegalovirus (strain Towne) (HHV-5), this protein is Envelope glycoprotein H.